Consider the following 181-residue polypeptide: Ribulose bisphosphate carboxylase small subunit 3B, chloroplastic (181 aa).

Residues 1–54 (MASSMLSSAAVVTSPAQATMVAPFTGLKSSAAFPVTRKTNKDITSIASNGGRVS) constitute a chloroplast transit peptide.

The protein belongs to the RuBisCO small chain family. Heterohexadecamer of 8 large and 8 small subunits.

The protein localises to the plastid. The protein resides in the chloroplast. Its function is as follows. RuBisCO catalyzes two reactions: the carboxylation of D-ribulose 1,5-bisphosphate, the primary event in carbon dioxide fixation, as well as the oxidative fragmentation of the pentose substrate. Both reactions occur simultaneously and in competition at the same active site. Although the small subunit is not catalytic it is essential for maximal activity. The protein is Ribulose bisphosphate carboxylase small subunit 3B, chloroplastic (RBCS-3B) of Arabidopsis thaliana (Mouse-ear cress).